A 196-amino-acid chain; its full sequence is Homeobox protein ANF-1 (196 aa).

Positions 119-178 (GRRPRTAFTRNQIEVLENVFKMNSYPGIDIREELARKLDLEEDRIQIWFQNRRAKLKRSH) form a DNA-binding region, homeobox.

Belongs to the ANF homeobox family.

It is found in the nucleus. May be involved in the early patterning of the most anterior region of the main embryonic body axis. In Gallus gallus (Chicken), this protein is Homeobox protein ANF-1.